Here is a 479-residue protein sequence, read N- to C-terminus: Ribosomal RNA small subunit methyltransferase F (479 aa).

Residues 125 to 131, Glu-149, Asp-176, and Asp-194 contribute to the S-adenosyl-L-methionine site; that span reads AAAPGSK. The Nucleophile role is filled by Cys-247.

Belongs to the class I-like SAM-binding methyltransferase superfamily. RsmB/NOP family.

It localises to the cytoplasm. It carries out the reaction cytidine(1407) in 16S rRNA + S-adenosyl-L-methionine = 5-methylcytidine(1407) in 16S rRNA + S-adenosyl-L-homocysteine + H(+). In terms of biological role, specifically methylates the cytosine at position 1407 (m5C1407) of 16S rRNA. In Escherichia coli O17:K52:H18 (strain UMN026 / ExPEC), this protein is Ribosomal RNA small subunit methyltransferase F.